Reading from the N-terminus, the 265-residue chain is Glutamate racemase (265 aa).

Residues 12–13 (DS) and 44–45 (YG) each bind substrate. Cysteine 75 acts as the Proton donor/acceptor in catalysis. Residue 76–77 (NT) participates in substrate binding. Cysteine 186 functions as the Proton donor/acceptor in the catalytic mechanism. 187–188 (TH) is a substrate binding site.

The protein belongs to the aspartate/glutamate racemases family.

The catalysed reaction is L-glutamate = D-glutamate. Its pathway is cell wall biogenesis; peptidoglycan biosynthesis. Provides the (R)-glutamate required for cell wall biosynthesis. This Pseudomonas aeruginosa (strain ATCC 15692 / DSM 22644 / CIP 104116 / JCM 14847 / LMG 12228 / 1C / PRS 101 / PAO1) protein is Glutamate racemase.